The following is a 364-amino-acid chain: Pre-small/secreted glycoprotein (364 aa).

The first 32 residues, 1–32, serve as a signal peptide directing secretion; sequence MGVTGILQLPRDRFKRTSFFLWVIILFQRTFS. N-linked (GlcNAc...) asparagine; by host glycosylation occurs at Asn40. Intrachain disulfides connect Cys108-Cys135 and Cys121-Cys147. N-linked (GlcNAc...) asparagine; by host glycosylation is found at Asn204, Asn228, Asn238, Asn257, and Asn268.

This sequence belongs to the filoviruses glycoprotein family. In terms of assembly, homodimer; disulfide-linked. The homodimers are linked by two disulfide bonds in a parallel orientation. Monomer. This precursor is processed into mature sGP and delta-peptide by host furin or furin-like proteases. The cleavage site corresponds to the furin optimal cleavage sequence [KR]-X-[KR]-R. Post-translationally, N-glycosylated. In terms of processing, O-glycosylated.

It is found in the secreted. Its function is as follows. Seems to possess an anti-inflammatory activity as it can reverse the barrier-decreasing effects of TNF alpha. Might therefore contribute to the lack of inflammatory reaction seen during infection in spite the of extensive necrosis and massive virus production. Does not seem to be involved in activation of primary macrophages. Does not seem to interact specifically with neutrophils. Viroporin that permeabilizes mammalian cell plasma membranes. It acts by altering permeation of ionic compounds and small molecules. This activity may lead to viral enterotoxic activity. The protein is Pre-small/secreted glycoprotein (GP) of Epomops franqueti (Franquet's epauletted fruit bat).